The chain runs to 163 residues: Phosphopantetheine adenylyltransferase (163 aa).

Substrate is bound at residue threonine 9. ATP-binding positions include 9–10 and histidine 17; that span reads TF. Positions 41, 76, and 90 each coordinate substrate. Residues 91-93, glutamate 101, and 126-132 each bind ATP; these read GLR and HQAIASR.

Belongs to the bacterial CoaD family. Homohexamer. Requires Mg(2+) as cofactor.

The protein localises to the cytoplasm. The enzyme catalyses (R)-4'-phosphopantetheine + ATP + H(+) = 3'-dephospho-CoA + diphosphate. The protein operates within cofactor biosynthesis; coenzyme A biosynthesis; CoA from (R)-pantothenate: step 4/5. Its function is as follows. Reversibly transfers an adenylyl group from ATP to 4'-phosphopantetheine, yielding dephospho-CoA (dPCoA) and pyrophosphate. In Caulobacter vibrioides (strain ATCC 19089 / CIP 103742 / CB 15) (Caulobacter crescentus), this protein is Phosphopantetheine adenylyltransferase.